A 196-amino-acid polypeptide reads, in one-letter code: Imidazole glycerol phosphate synthase subunit HisH (196 aa).

The 195-residue stretch at 2 to 196 (KVVILDTGCA…AQLLKNFLEM (195 aa)) folds into the Glutamine amidotransferase type-1 domain. The active-site Nucleophile is Cys-77. Active-site residues include His-178 and Glu-180.

As to quaternary structure, heterodimer of HisH and HisF.

It is found in the cytoplasm. It carries out the reaction 5-[(5-phospho-1-deoxy-D-ribulos-1-ylimino)methylamino]-1-(5-phospho-beta-D-ribosyl)imidazole-4-carboxamide + L-glutamine = D-erythro-1-(imidazol-4-yl)glycerol 3-phosphate + 5-amino-1-(5-phospho-beta-D-ribosyl)imidazole-4-carboxamide + L-glutamate + H(+). The catalysed reaction is L-glutamine + H2O = L-glutamate + NH4(+). It participates in amino-acid biosynthesis; L-histidine biosynthesis; L-histidine from 5-phospho-alpha-D-ribose 1-diphosphate: step 5/9. IGPS catalyzes the conversion of PRFAR and glutamine to IGP, AICAR and glutamate. The HisH subunit catalyzes the hydrolysis of glutamine to glutamate and ammonia as part of the synthesis of IGP and AICAR. The resulting ammonia molecule is channeled to the active site of HisF. The chain is Imidazole glycerol phosphate synthase subunit HisH from Pectobacterium atrosepticum (strain SCRI 1043 / ATCC BAA-672) (Erwinia carotovora subsp. atroseptica).